The primary structure comprises 298 residues: Triosephosphate isomerase, chloroplastic (298 aa).

Pro residues predominate over residues 1-18 (MAARRPSPPPASPPPPRP). The interval 1 to 32 (MAARRPSPPPASPPPPRPRSTTTTRTTSSASA) is disordered. A chloroplast-targeting transit peptide spans 1–43 (MAARRPSPPPASPPPPRPRSTTTTRTTSSASAAPAAAQRLVAM). Residues 19–32 (RSTTTTRTTSSASA) are compositionally biased toward low complexity. Residues asparagine 54 and lysine 56 each coordinate substrate. Histidine 138 acts as the Electrophile in catalysis. Position 186 is a cysteine derivative (cysteine 186). Glutamate 208 acts as the Proton acceptor in catalysis.

The protein belongs to the triosephosphate isomerase family. Homodimer.

The protein resides in the plastid. It localises to the chloroplast. It catalyses the reaction D-glyceraldehyde 3-phosphate = dihydroxyacetone phosphate. Its pathway is carbohydrate biosynthesis; Calvin cycle. In Secale cereale (Rye), this protein is Triosephosphate isomerase, chloroplastic.